A 300-amino-acid chain; its full sequence is Zinc finger CCCH domain-containing protein 14 (300 aa).

The segment at 1–38 (MEVGGRKRGKPDGANGAGGKRARESESFQTGVGSKSKP) is disordered. 2 C3H1-type zinc fingers span residues 33–61 (GSKS…HHFP) and 99–127 (TVKT…HGER). One can recognise a KH domain in the interval 170 to 234 (SATAKISVDA…DQIKNASAMV (65 aa)). Residues 243–262 (GGAPPQGKKPVGGSHRGGGP) form a disordered region. A C3H1-type 3 zinc finger spans residues 265-292 (NFKTKLCENFTKGSCTFGDRCHFAHGEN).

The protein is Zinc finger CCCH domain-containing protein 14 of Oryza sativa subsp. japonica (Rice).